The primary structure comprises 152 residues: Superoxide dismutase [Cu-Zn] (152 aa).

Residues His-45, His-47, and His-62 each coordinate Cu cation. Cysteines 56 and 145 form a disulfide. Positions 62, 70, 79, and 82 each coordinate Zn(2+). His-119 lines the Cu cation pocket.

This sequence belongs to the Cu-Zn superoxide dismutase family. As to quaternary structure, homodimer. Requires Cu cation as cofactor. The cofactor is Zn(2+).

Its subcellular location is the cytoplasm. It catalyses the reaction 2 superoxide + 2 H(+) = H2O2 + O2. Destroys radicals which are normally produced within the cells and which are toxic to biological systems. In Zantedeschia aethiopica (White calla lily), this protein is Superoxide dismutase [Cu-Zn] (SODCC).